The sequence spans 359 residues: MPTYSKRKSRGSLEVSEKTNQPKFIKRSQSSETITSGETASELMQDEKEQSNGAVGSIEDEELQRLRENQASVEALSKKPESIDRELGVEALEIDNVVKSDEEKEDPNGASSKTVKARPLPAGSVHRVTTHMAPIPARSIGSHDTTTQRLIVVLDQACLEIYKVGKAKDAKYQLLNCDDHQGILKKLNRNIAQARPDITHQCLLTLLDSPLNKAGRLQVYIHTAKKVLIEVNPSVRIPRTFKRFSGLMVQLLHKLSIRSVNGNEKLLKVIKNPVTDYLPPNCRKATLSFDAPTVPPRKYLETLQPNQSVCIAIGAMAHGPDDFSDGWVDEKISISDYPLSASIACSKFLHSMEDFLGIV.

Residues 1–10 (MPTYSKRKSR) show a composition bias toward basic residues. Disordered stretches follow at residues 1–62 (MPTY…EDEE) and 98–118 (VKSD…VKAR). Serine 12 bears the Phosphoserine mark. Polar residues predominate over residues 18-39 (KTNQPKFIKRSQSSETITSGET). Position 33 is a phosphothreonine (threonine 33). Serine 100 carries the phosphoserine modification. S-adenosyl-L-methionine contacts are provided by residues leucine 287, glycine 314, 319 to 321 (GPD), and 334 to 339 (ISDYPL).

Belongs to the class IV-like SAM-binding methyltransferase superfamily. RNA methyltransferase NEP1 family. In terms of assembly, homodimer.

The protein resides in the nucleus. It localises to the nucleolus. The enzyme catalyses a pseudouridine in rRNA + S-adenosyl-L-methionine = an N(1)-methylpseudouridine in rRNA + S-adenosyl-L-homocysteine + H(+). In terms of biological role, S-adenosyl-L-methionine-dependent pseudouridine N(1)-methyltransferase that methylates the pseudouridine corresponding to position 1189 (Psi1189) in S.cerevisiae 18S rRNA. Involved the biosynthesis of the hypermodified N1-methyl-N3-(3-amino-3-carboxypropyl) pseudouridine (m1acp3-Psi) conserved in eukaryotic 18S rRNA. Also has an essential role in 40S ribosomal subunit biogenesis independent on its methyltransferase activity, facilitating the incorporation of ribosomal protein S19 during the formation of pre-ribosomes. Essential for cell growth. It also has a key role in promoting the mating function. The sequence is that of Ribosomal RNA small subunit methyltransferase mra1 from Schizosaccharomyces pombe (strain 972 / ATCC 24843) (Fission yeast).